The primary structure comprises 1364 residues: Serine protease EatA (1364 aa).

A signal peptide spans 1-56 (MNKVFSLKYSFLAKGFIAVSELARRVSVKGKLKSASSIIISPITIAIVSYAPPSLA). One can recognise a Peptidase S6 domain in the interval 57 to 307 (ATVNADISYQ…VVTTQDFLHQ (251 aa)). Residues His-134, Asp-162, and Ser-267 each act as charge relay system in the active site. The Autotransporter domain occupies 1098 to 1364 (DSQGDAGGWA…SINANFRYYF (267 aa)).

Post-translationally, cleaved to release the mature protein from the outer membrane.

It localises to the periplasm. The protein localises to the secreted. It is found in the cell surface. The protein resides in the cell outer membrane. With respect to regulation, inhibited by phenylmethylsulfonyl fluoride. In terms of biological role, autotransporter serine protease probably involved in virulence. This Escherichia coli O78:H11 (strain H10407 / ETEC) protein is Serine protease EatA (eatA).